A 300-amino-acid polypeptide reads, in one-letter code: 2-oxoglutarate-dependent dioxygenase DAO (300 aa).

Positions 149–252 (WPCQFRMNRY…VSIAMFLLAP (104 aa)) constitute a Fe2OG dioxygenase domain. Fe cation is bound by residues histidine 173, aspartate 175, and histidine 232. Residue arginine 242 coordinates 2-oxoglutarate.

Belongs to the iron/ascorbate-dependent oxidoreductase family. It depends on Fe(2+) as a cofactor.

2-oxoglutarate-dependent dioxygenase essential for auxin catabolism and maintenance of auxin homeostasis in reproductive organs. Catalyzes the irreversible oxidation of indole-3-acetic acid (IAA) to the biologically inactive 2-oxoindole-3-acetic acid (OxIAA). The protein is 2-oxoglutarate-dependent dioxygenase DAO (DAO) of Oryza sativa subsp. indica (Rice).